Reading from the N-terminus, the 209-residue chain is NADH-ubiquinone oxidoreductase subunit 9 (209 aa).

Belongs to the complex I 30 kDa subunit family. Complex I is composed of about 30 different subunits.

The protein localises to the mitochondrion inner membrane. The catalysed reaction is a ubiquinone + NADH + 5 H(+)(in) = a ubiquinol + NAD(+) + 4 H(+)(out). In terms of biological role, core subunit of the mitochondrial membrane respiratory chain NADH dehydrogenase (Complex I) that is believed to belong to the minimal assembly required for catalysis. Complex I functions in the transfer of electrons from NADH to the respiratory chain. The immediate electron acceptor for the enzyme is believed to be ubiquinone. The polypeptide is NADH-ubiquinone oxidoreductase subunit 9 (nad9) (Dictyostelium citrinum (Slime mold)).